The chain runs to 567 residues: Mitochondrial distribution and morphology protein 34 (567 aa).

Residues 1–224 form the SMP-LTD domain; sequence MSFKFNEESF…LPSALFNMSR (224 aa). A compositionally biased stretch (polar residues) spans 392–416; that stretch reads NKATETSSNLNADSEITPVSSSHNA. Positions 392–453 are disordered; that stretch reads NKATETSSNL…NRSSSFTSSI (62 aa). Residues 417-452 are compositionally biased toward low complexity; the sequence is TSSVNTITSLTTSSLGSTAGSSNSKNTNRSSSFTSS.

Belongs to the MDM34 family. As to quaternary structure, component of the ER-mitochondria encounter structure (ERMES) or MDM complex, composed of MMM1, MDM10, MDM12 and MDM34.

It is found in the mitochondrion outer membrane. Functionally, component of the ERMES/MDM complex, which serves as a molecular tether to connect the endoplasmic reticulum (ER) and mitochondria. Components of this complex are involved in the control of mitochondrial shape and protein biogenesis, and function in nonvesicular lipid trafficking between the ER and mitochondria. MDM34 is required for the interaction of the ER-resident membrane protein MMM1 and the outer mitochondrial membrane-resident beta-barrel protein MDM10. In Vanderwaltozyma polyspora (strain ATCC 22028 / DSM 70294 / BCRC 21397 / CBS 2163 / NBRC 10782 / NRRL Y-8283 / UCD 57-17) (Kluyveromyces polysporus), this protein is Mitochondrial distribution and morphology protein 34.